Consider the following 273-residue polypeptide: Large ribosomal subunit protein uL2 (273 aa).

A disordered region spans residues 228–273 (VDHPHGGGEGKTSGGRHPVTPWGFPTKGKKTRKNKRTSKFIVKKRK). Over residues 254–273 (KGKKTRKNKRTSKFIVKKRK) the composition is skewed to basic residues.

Belongs to the universal ribosomal protein uL2 family. In terms of assembly, part of the 50S ribosomal subunit. Forms a bridge to the 30S subunit in the 70S ribosome.

One of the primary rRNA binding proteins. Required for association of the 30S and 50S subunits to form the 70S ribosome, for tRNA binding and peptide bond formation. It has been suggested to have peptidyltransferase activity; this is somewhat controversial. Makes several contacts with the 16S rRNA in the 70S ribosome. This Rickettsia africae (strain ESF-5) protein is Large ribosomal subunit protein uL2.